The primary structure comprises 436 residues: Adenylosuccinate synthetase (436 aa).

Residues 12-18 and 40-42 contribute to the GTP site; these read GDEGKGK and GHT. The active-site Proton acceptor is aspartate 13. Positions 13 and 40 each coordinate Mg(2+). Residues 13–16, 38–41, threonine 128, arginine 142, glutamine 223, threonine 238, and arginine 302 each bind IMP; these read DEGK and NAGH. The active-site Proton donor is histidine 41. 298–304 contacts substrate; the sequence is TTTGRRR. Residues arginine 304, 330 to 332, and 412 to 414 each bind GTP; these read KLD and SLG.

Belongs to the adenylosuccinate synthetase family. Homodimer. It depends on Mg(2+) as a cofactor.

Its subcellular location is the cytoplasm. It carries out the reaction IMP + L-aspartate + GTP = N(6)-(1,2-dicarboxyethyl)-AMP + GDP + phosphate + 2 H(+). Its pathway is purine metabolism; AMP biosynthesis via de novo pathway; AMP from IMP: step 1/2. In terms of biological role, plays an important role in the de novo pathway of purine nucleotide biosynthesis. Catalyzes the first committed step in the biosynthesis of AMP from IMP. This is Adenylosuccinate synthetase from Prochlorococcus marinus (strain AS9601).